The primary structure comprises 184 residues: Photosystem I assembly protein Ycf4 (184 aa).

The next 2 membrane-spanning stretches (helical) occupy residues isoleucine 19–glycine 39 and isoleucine 57–serine 77.

It belongs to the Ycf4 family.

Its subcellular location is the plastid. The protein localises to the chloroplast thylakoid membrane. Seems to be required for the assembly of the photosystem I complex. In Nymphaea alba (White water-lily), this protein is Photosystem I assembly protein Ycf4.